Here is a 266-residue protein sequence, read N- to C-terminus: Signal peptidase I (266 aa).

Topologically, residues 1-20 are cytoplasmic; sequence MQTDNTKSNTNKTAKQEWGS. A helical membrane pass occupies residues 21–41; the sequence is FAFVICIALLIRILIMEPFTV. Over 42–266 the chain is Periplasmic; the sequence is PTGSMKATIL…IFRNLYNTDA (225 aa). Catalysis depends on residues serine 45 and lysine 108.

This sequence belongs to the peptidase S26 family.

Its subcellular location is the cell inner membrane. It catalyses the reaction Cleavage of hydrophobic, N-terminal signal or leader sequences from secreted and periplasmic proteins.. Its function is as follows. Complements E.coli mutants temperature-sensitive for LepB function. The protein is Signal peptidase I (lepB) of Rickettsia rickettsii (strain Sheila Smith).